The sequence spans 308 residues: Methionine synthase (308 aa).

Zn(2+) is bound by residues histidine 201, cysteine 203, glutamate 224, and cysteine 285.

The protein belongs to the archaeal MetE family. Zn(2+) serves as cofactor.

The protein operates within amino-acid biosynthesis; L-methionine biosynthesis via de novo pathway. Functionally, catalyzes the transfer of a methyl group to L-homocysteine resulting in methionine formation. Can use methylcobalamin and methylcobinamide as methyl donors, but methylcobalamin is not considered to be the physiological substrate. In Methanothermobacter thermautotrophicus (strain ATCC 29096 / DSM 1053 / JCM 10044 / NBRC 100330 / Delta H) (Methanobacterium thermoautotrophicum), this protein is Methionine synthase.